The chain runs to 352 residues: B1 bradykinin receptor (352 aa).

The Extracellular portion of the chain corresponds to 1–41 (MASWPPLELQSSNQSQLFPQNATACDNAPEAWDLLHRVLPT). Asn13 and Asn21 each carry an N-linked (GlcNAc...) asparagine glycan. Residues 42–62 (FIISICSFGLLGNLFVLLVFL) traverse the membrane as a helical segment. Over 63–72 (LPRRRLNVAE) the chain is Cytoplasmic. A helical transmembrane segment spans residues 73 to 93 (IYLANLAASDLVFVLGLPFWA). Over 94 to 110 (ENIWNQFNWPFGALLCR) the chain is Extracellular. Cys109 and Cys188 are oxidised to a cystine. The helical transmembrane segment at 111-131 (VINGIIKANLFISIFLVVAIS) threads the bilayer. Residues 132-153 (QDRYCVLVHPMASRRRQRRRQA) are Cytoplasmic-facing. A helical transmembrane segment spans residues 154 to 174 (RVTCVLIWVVGGLLSIPTFLL). Residues 175-206 (RSIQAVPDLNITACILLLPHEAWHFARIVELN) are Extracellular-facing. The N-linked (GlcNAc...) asparagine glycan is linked to Asn184. Residues 207–227 (ILAFLLPLAAIIFFNYHILAS) form a helical membrane-spanning segment. Residues 228 to 250 (LRGREEVSRTRCGGSKDSKTTAL) lie on the Cytoplasmic side of the membrane. A helical membrane pass occupies residues 251–271 (ILTLVVAFLVCWAPYHFFAFL). Residues 272–294 (EFLFQVQAVRGCFWEDFIDLGLQ) lie on the Extracellular side of the membrane. A helical transmembrane segment spans residues 295-315 (LANFLAFTNSSLNPVIYVFVG). At 316–352 (RLFRTKVWELYKQCTPKSLAPISSSHRKEIFQLFWRN) the chain is on the cytoplasmic side. The S-palmitoyl cysteine moiety is linked to residue Cys329.

This sequence belongs to the G-protein coupled receptor 1 family. Bradykinin receptor subfamily. BDKRB1 sub-subfamily.

The protein resides in the cell membrane. In terms of biological role, this is a receptor for bradykinin. Could be a factor in chronic pain and inflammation. The chain is B1 bradykinin receptor (BDKRB1) from Macaca mulatta (Rhesus macaque).